We begin with the raw amino-acid sequence, 372 residues long: Aminomethyltransferase (372 aa).

Belongs to the GcvT family. The glycine cleavage system is composed of four proteins: P, T, L and H.

The catalysed reaction is N(6)-[(R)-S(8)-aminomethyldihydrolipoyl]-L-lysyl-[protein] + (6S)-5,6,7,8-tetrahydrofolate = N(6)-[(R)-dihydrolipoyl]-L-lysyl-[protein] + (6R)-5,10-methylene-5,6,7,8-tetrahydrofolate + NH4(+). The glycine cleavage system catalyzes the degradation of glycine. The protein is Aminomethyltransferase of Streptomyces avermitilis (strain ATCC 31267 / DSM 46492 / JCM 5070 / NBRC 14893 / NCIMB 12804 / NRRL 8165 / MA-4680).